Reading from the N-terminus, the 337-residue chain is GDP-fucose transporter, Golgi (337 aa).

Transmembrane regions (helical) follow at residues 13 to 35 (NKYL…TVFV), 45 to 67 (VNLG…ICFV), 95 to 117 (ILPL…SYVT), 121 to 140 (YYIG…YVIL), 145 to 163 (SFKC…WLGV), 173 to 192 (SWRG…MFSI), 205 to 227 (VWLL…IIIN), and 242 to 264 (SWFW…VTAL).

Belongs to the TPT transporter family. SLC35C subfamily.

The protein localises to the golgi apparatus membrane. In terms of biological role, involved in GDP-fucose import from the cytoplasm into the Golgi lumen. Plays a major role in the fucosylation of N-glycans. Functions redundantly with Efr in the O-fucosylation of Notch, positively regulating Notch signaling. This Drosophila melanogaster (Fruit fly) protein is GDP-fucose transporter, Golgi.